The chain runs to 370 residues: Chaperone protein DnaJ (370 aa).

The J domain occupies 4–68 (DYYQVLGVSK…QKRAAYDRFG (65 aa)). The CR-type zinc-finger motif lies at 133 to 211 (GIEKNISFSS…CHGMGRYHKQ (79 aa)). 8 residues coordinate Zn(2+): Cys-146, Cys-149, Cys-163, Cys-166, Cys-185, Cys-188, Cys-199, and Cys-202. CXXCXGXG motif repeat units lie at residues 146 to 153 (CDTCHGTG), 163 to 170 (CDACGGVG), 185 to 192 (CHKCQGNG), and 199 to 206 (CKKCHGMG).

It belongs to the DnaJ family. Homodimer. Zn(2+) serves as cofactor.

The protein resides in the cytoplasm. Participates actively in the response to hyperosmotic and heat shock by preventing the aggregation of stress-denatured proteins and by disaggregating proteins, also in an autonomous, DnaK-independent fashion. Unfolded proteins bind initially to DnaJ; upon interaction with the DnaJ-bound protein, DnaK hydrolyzes its bound ATP, resulting in the formation of a stable complex. GrpE releases ADP from DnaK; ATP binding to DnaK triggers the release of the substrate protein, thus completing the reaction cycle. Several rounds of ATP-dependent interactions between DnaJ, DnaK and GrpE are required for fully efficient folding. Also involved, together with DnaK and GrpE, in the DNA replication of plasmids through activation of initiation proteins. This chain is Chaperone protein DnaJ, found in Rickettsia prowazekii (strain Madrid E).